The chain runs to 226 residues: 2-C-methyl-D-erythritol 4-phosphate cytidylyltransferase (226 aa).

This sequence belongs to the IspD/TarI cytidylyltransferase family. IspD subfamily.

The catalysed reaction is 2-C-methyl-D-erythritol 4-phosphate + CTP + H(+) = 4-CDP-2-C-methyl-D-erythritol + diphosphate. It functions in the pathway isoprenoid biosynthesis; isopentenyl diphosphate biosynthesis via DXP pathway; isopentenyl diphosphate from 1-deoxy-D-xylulose 5-phosphate: step 2/6. In terms of biological role, catalyzes the formation of 4-diphosphocytidyl-2-C-methyl-D-erythritol from CTP and 2-C-methyl-D-erythritol 4-phosphate (MEP). In Bacillus mycoides (strain KBAB4) (Bacillus weihenstephanensis), this protein is 2-C-methyl-D-erythritol 4-phosphate cytidylyltransferase.